The sequence spans 399 residues: ATP phosphoribosyltransferase regulatory subunit (399 aa).

It belongs to the class-II aminoacyl-tRNA synthetase family. HisZ subfamily. Heteromultimer composed of HisG and HisZ subunits.

The protein resides in the cytoplasm. Its pathway is amino-acid biosynthesis; L-histidine biosynthesis; L-histidine from 5-phospho-alpha-D-ribose 1-diphosphate: step 1/9. Required for the first step of histidine biosynthesis. May allow the feedback regulation of ATP phosphoribosyltransferase activity by histidine. This chain is ATP phosphoribosyltransferase regulatory subunit, found in Symbiobacterium thermophilum (strain DSM 24528 / JCM 14929 / IAM 14863 / T).